A 34-amino-acid polypeptide reads, in one-letter code: Dermaseptin-S2 (34 aa).

Belongs to the frog skin active peptide (FSAP) family. Dermaseptin subfamily. In terms of tissue distribution, expressed by the skin glands.

The protein resides in the secreted. Potent antimicrobial peptide with activity against bacteria and protozoa. Also has activity against fungi. Probably acts by disturbing membrane functions with its amphipathic structure. This is Dermaseptin-S2 from Phyllomedusa sauvagei (Sauvage's leaf frog).